We begin with the raw amino-acid sequence, 298 residues long: DDRGK domain-containing protein 1 (298 aa).

Residues 1–21 (MDIVLYFVAVPILIVLIVSAV) traverse the membrane as a helical segment. Topologically, residues 22-298 (KVRGKTEEDN…NLIPEIHNTA (277 aa)) are cytoplasmic. Residues 71-149 (NSAYREAADN…EERRKEDKKE (79 aa)) are disordered. Positions 82 to 94 (SPVEVEEEYEEAE) are enriched in acidic residues. Residues 110–149 (KLEEKQAKRAQREAELEEREERKRTQELREEERRKEDKKE) show a composition bias toward basic and acidic residues. A UFM1-interacting motif (UFIM) motif is present at residues 181-195 (SFVVEEQGEADELTE). One can recognise a PCI domain in the interval 215–259 (VLLEDLASHFGLRTQDAISRLQDLLSDGSITGVIDDRGKFIFITP).

Belongs to the DDRGK1 family. In terms of assembly, component of the UFM1 ribosome E3 ligase (UREL) complex, composed of ufl1, ddrgk1 and cdk5rap3.

The protein localises to the endoplasmic reticulum membrane. In terms of biological role, component of the UFM1 ribosome E3 ligase (UREL) complex, a multiprotein complex that catalyzes ufmylation of endoplasmic reticulum-docked proteins. The UREL complex plays a key role in ribosome recycling by mediating mono-ufmylation of the RPL26/uL24 subunit of the 60S ribosome following ribosome dissociation: ufmylation weakens the junction between post-termination 60S subunits and SEC61 translocons, promoting release and recycling of the large ribosomal subunit from the endoplasmic reticulum membrane. Ufmylation of RPL26/uL24 and subsequent 60S ribosome recycling either take place after normal termination of translation or after ribosome stalling during cotranslational translocation at the endoplasmic reticulum. Within the UREL complex, DDRGK1 tethers the complex to the endoplasmic reticulum membrane to restrict its activity to endoplasmic reticulum-docked ribosomes and acts as an ufmylation 'reader': following RPL26/uL24 ufmylation, DDRGK1 specifically binds to ufmylated RPL26/uL24 via its UFIM motif, resulting in stable association between the 60S ribosome and the UREL complex, followed by dissociation of the 60S ribosome subunit from the endoplasmic reticulum membrane. The UREL complex is also involved in reticulophagy in response to endoplasmic reticulum stress by promoting ufmylation of proteins such as CYB5R3 and RPN1, thereby promoting lysosomal degradation of ufmylated proteins. Required for stabilization and ufmylation of ATG9A. The protein is DDRGK domain-containing protein 1 of Osmerus mordax (Rainbow smelt).